The sequence spans 393 residues: MSLRIGMVAGEPSGDLLAGRIIAGLQARAPGVHCAGIGGPQMAARGFEAWHPMHALTVFGYIDAFKRIPSLLSTYGDVKRRLLAEPPSVFVGIDAPDFNLRLEHQLRQAGTPTVHFVGPSIWAWRYERINKIRAAVSHMLVLFPFEEALYRKEGIPVTYVGHPLAGVIPMQPDRAAARARLGIDADARVLAILPGSRSSEIRLLAPRFLQAAAELVRRDPRLQCVVPMVNPQRRAEFEAIATQHPVPGLRCVTAAEGQGETPVAWSVMEASNAVLVASGTATLETALYKRPMVISYVLSPWMRRIMAWKSGQQRPYLPWVGLPNVLLRDFAVPELLQDEATPAALAEATWQALTDEAGAARIEARFTALHQDLLRDTPALAAQAILEVADGAA.

Belongs to the LpxB family.

The enzyme catalyses a lipid X + a UDP-2-N,3-O-bis[(3R)-3-hydroxyacyl]-alpha-D-glucosamine = a lipid A disaccharide + UDP + H(+). Its pathway is bacterial outer membrane biogenesis; LPS lipid A biosynthesis. Condensation of UDP-2,3-diacylglucosamine and 2,3-diacylglucosamine-1-phosphate to form lipid A disaccharide, a precursor of lipid A, a phosphorylated glycolipid that anchors the lipopolysaccharide to the outer membrane of the cell. This is Lipid-A-disaccharide synthase from Bordetella pertussis (strain Tohama I / ATCC BAA-589 / NCTC 13251).